The following is a 495-amino-acid chain: Probable endopolygalacturonase D (495 aa).

The signal sequence occupies residues 1 to 16 (MKRSALLASFLPLALG). An intrachain disulfide couples Cys-154 to Cys-169. 3 PbH1 repeats span residues 261–283 (MYNSKIENLNILNWPVHCFEIEN), 284–322 (TEYLTISGLILNNTAGDAANSKSDGDPAAHNTDGFDIKQ), and 323–344 (SDFLTLSNSWVHNQDDCVAVTS). Residue Asn-295 is glycosylated (N-linked (GlcNAc...) asparagine). The Proton donor role is filled by Asp-337. A disulfide bond links Cys-339 and Cys-355. His-359 is a catalytic residue. Asn-371 is a glycosylation site (N-linked (GlcNAc...) asparagine). 2 PbH1 repeats span residues 374–395 (VDGVTFSNSQVINSENGCRIKS) and 403–425 (VYNVKYENITLSGISDYGIDIQQ). Asn-410 and Asn-444 each carry an N-linked (GlcNAc...) asparagine glycan. Cystine bridges form between Cys-464–Cys-469 and Cys-487–Cys-494. One copy of the PbH1 6 repeat lies at 469-492 (CSNFVFTDVDITGGSDDSCNYPSS).

Belongs to the glycosyl hydrolase 28 family.

Its subcellular location is the secreted. The catalysed reaction is (1,4-alpha-D-galacturonosyl)n+m + H2O = (1,4-alpha-D-galacturonosyl)n + (1,4-alpha-D-galacturonosyl)m.. Its function is as follows. Involved in maceration and soft-rotting of plant tissue. Hydrolyzes the 1,4-alpha glycosidic bonds of de-esterified pectate in the smooth region of the plant cell wall. In Aspergillus niger (strain ATCC MYA-4892 / CBS 513.88 / FGSC A1513), this protein is Probable endopolygalacturonase D (pgaD).